Consider the following 76-residue polypeptide: Cytochrome c oxidase subunit 6C-2 (76 aa).

At 4–14 (GALLPKPQMRG) the chain is on the mitochondrial matrix side. A helical transmembrane segment spans residues 15–55 (LLAKRLRVHIVGAFVVALGVAAAYKFGVAEPRKKAYADFYR). Over 56-76 (NYDSMKDFEEMRQAGVFQSAK) the chain is Mitochondrial intermembrane. S74 carries the post-translational modification Phosphoserine.

Belongs to the cytochrome c oxidase subunit 6c family. As to quaternary structure, component of the cytochrome c oxidase (complex IV, CIV), a multisubunit enzyme composed of 14 subunits. The complex is composed of a catalytic core of 3 subunits MT-CO1, MT-CO2 and MT-CO3, encoded in the mitochondrial DNA, and 11 supernumerary subunits COX4I, COX5A, COX5B, COX6A, COX6B, COX6C, COX7A, COX7B, COX7C, COX8 and NDUFA4, which are encoded in the nuclear genome. The complex exists as a monomer or a dimer and forms supercomplexes (SCs) in the inner mitochondrial membrane with NADH-ubiquinone oxidoreductase (complex I, CI) and ubiquinol-cytochrome c oxidoreductase (cytochrome b-c1 complex, complex III, CIII), resulting in different assemblies (supercomplex SCI(1)III(2)IV(1) and megacomplex MCI(2)III(2)IV(2)).

The protein localises to the mitochondrion inner membrane. Its pathway is energy metabolism; oxidative phosphorylation. Component of the cytochrome c oxidase, the last enzyme in the mitochondrial electron transport chain which drives oxidative phosphorylation. The respiratory chain contains 3 multisubunit complexes succinate dehydrogenase (complex II, CII), ubiquinol-cytochrome c oxidoreductase (cytochrome b-c1 complex, complex III, CIII) and cytochrome c oxidase (complex IV, CIV), that cooperate to transfer electrons derived from NADH and succinate to molecular oxygen, creating an electrochemical gradient over the inner membrane that drives transmembrane transport and the ATP synthase. Cytochrome c oxidase is the component of the respiratory chain that catalyzes the reduction of oxygen to water. Electrons originating from reduced cytochrome c in the intermembrane space (IMS) are transferred via the dinuclear copper A center (CU(A)) of subunit 2 and heme A of subunit 1 to the active site in subunit 1, a binuclear center (BNC) formed by heme A3 and copper B (CU(B)). The BNC reduces molecular oxygen to 2 water molecules using 4 electrons from cytochrome c in the IMS and 4 protons from the mitochondrial matrix. The protein is Cytochrome c oxidase subunit 6C-2 (Cox6c2) of Rattus norvegicus (Rat).